Here is a 268-residue protein sequence, read N- to C-terminus: Hydroxyethylthiazole kinase (268 aa).

Met46 provides a ligand contact to substrate. The ATP site is built by Arg122 and Thr168. Substrate is bound at residue Gly195.

It belongs to the Thz kinase family. Mg(2+) serves as cofactor.

The catalysed reaction is 5-(2-hydroxyethyl)-4-methylthiazole + ATP = 4-methyl-5-(2-phosphooxyethyl)-thiazole + ADP + H(+). Its pathway is cofactor biosynthesis; thiamine diphosphate biosynthesis; 4-methyl-5-(2-phosphoethyl)-thiazole from 5-(2-hydroxyethyl)-4-methylthiazole: step 1/1. Functionally, catalyzes the phosphorylation of the hydroxyl group of 4-methyl-5-beta-hydroxyethylthiazole (THZ). The protein is Hydroxyethylthiazole kinase of Desulfatibacillum aliphaticivorans.